The primary structure comprises 767 residues: 5-methyltetrahydropteroyltriglutamate--homocysteine methyltransferase (767 aa).

K19 is a binding site for 5-methyltetrahydropteroyltri-L-glutamate. S89 is subject to Phosphoserine. N126 provides a ligand contact to 5-methyltetrahydropteroyltri-L-glutamate. S242 bears the Phosphoserine mark. Residues 444 to 446 and E497 contribute to the L-homocysteine site; that span reads IGS. Residues 444 to 446 and E497 contribute to the L-methionine site; that span reads IGS. Residues D502, Y525, and 528-529 each bind 5-methyltetrahydropteroyltri-L-glutamate; that span reads RY. Position 566 is a phosphothreonine (T566). Position 574 (W574) interacts with 5-methyltetrahydropteroyltri-L-glutamate. D612 contributes to the L-homocysteine binding site. Position 612 (D612) interacts with L-methionine. S629 carries the post-translational modification Phosphoserine. The Zn(2+) site is built by H655, C657, and E677. The active-site Proton donor is the H705. S706 is modified (phosphoserine). C737 is a Zn(2+) binding site.

This sequence belongs to the vitamin-B12 independent methionine synthase family. The cofactor is Zn(2+).

The catalysed reaction is 5-methyltetrahydropteroyltri-L-glutamate + L-homocysteine = tetrahydropteroyltri-L-glutamate + L-methionine. The protein operates within amino-acid biosynthesis; L-methionine biosynthesis via de novo pathway; L-methionine from L-homocysteine (MetE route): step 1/1. Functionally, catalyzes the transfer of a methyl group from 5-methyltetrahydrofolate to homocysteine resulting in methionine formation. The sequence is that of 5-methyltetrahydropteroyltriglutamate--homocysteine methyltransferase (MET6) from Saccharomyces cerevisiae (strain ATCC 204508 / S288c) (Baker's yeast).